Here is a 242-residue protein sequence, read N- to C-terminus: Eukaryotic translation initiation factor 4E type 1B (242 aa).

The segment at 1–42 (MLAVEVSEAEGGIREWEEEEKEEEAAERTPTGEKSPNSPRTL) is disordered. A compositionally biased stretch (acidic residues) spans 16-25 (WEEEEKEEEA). Residues 32–41 (GEKSPNSPRT) are compositionally biased toward polar residues. The interval 62-65 (HPLQ) is EIF4EBP1/2/3 binding. 81 to 82 (WQ) contributes to the mRNA binding site. The EIF4EBP1/2/3 binding stretch occupies residues 98–102 (WALYS). 127–128 (WE) is a binding site for mRNA. The interval 157–164 (ETLLCLIG) is EIF4EBP1/2/3 binding. MRNA contacts are provided by residues 182 to 187 (RTKGDK) and 230 to 232 (TKS).

This sequence belongs to the eukaryotic initiation factor 4E family. As to quaternary structure, eIF4F is a multi-subunit complex, the composition of which varies with external and internal environmental conditions. It is composed of at least EIF4A, EIF4E and EIF4G.

In terms of biological role, recognizes and binds the 7-methylguanosine-containing mRNA cap during an early step in the initiation of protein synthesis and facilitates ribosome binding by inducing the unwinding of the mRNAs secondary structure. The polypeptide is Eukaryotic translation initiation factor 4E type 1B (EIF4E1B) (Homo sapiens (Human)).